Here is a 429-residue protein sequence, read N- to C-terminus: Probable proton-coupled zinc antiporter SLC30A4 (429 aa).

The Cytoplasmic segment spans residues 1 to 113 (MAGSGAWKRL…LLKQRKVKTR (113 aa)). A helical membrane pass occupies residues 114 to 134 (LTIAAVLYLLFMIGELVGGYI). The Lumenal segment spans residues 135–143 (ANSLAIMTD). A helical membrane pass occupies residues 144–164 (ALHMLTDLSAIILTLLALWLS). Positions 146 and 150 each coordinate Zn(2+). Residues 165–178 (SKSPTKRFTFGFHR) lie on the Cytoplasmic side of the membrane. Residues 179–199 (LEVLSAMISVLLVYILMGFLL) traverse the membrane as a helical segment. Topologically, residues 200-216 (YEAVQRTIHMKYEINGD) are lumenal. Residues 217–237 (IMLITAAIGVAVNVIMGFLLN) form a helical membrane-spanning segment. Residues 238 to 274 (QSGHHHAHSHSLPSNSPTTGPRCGHNQGQDSLAVRAA) lie on the Cytoplasmic side of the membrane. Positions 240 to 264 (GHHHAHSHSLPSNSPTTGPRCGHNQ) are zinc binding. Residues 275-295 (FVHALGDLVQSVGVLIAAYII) form a helical membrane-spanning segment. Residues H277 and D281 each coordinate Zn(2+). Over 296-310 (RFKPEYRIADPICTY) the chain is Lumenal. A helical membrane pass occupies residues 311–331 (VFSLLVAFTTFRIIWDTVVII). The Cytoplasmic portion of the chain corresponds to 332 to 429 (LEGVPSHLNV…TCANCQSSSS (98 aa)).

Belongs to the cation diffusion facilitator (CDF) transporter (TC 2.A.4) family. SLC30A subfamily. Homodimerization could regulate efficiency for zinc transport. Interacts with TMEM163.

It localises to the endosome membrane. The protein localises to the late endosome membrane. Its subcellular location is the lysosome membrane. The enzyme catalyses Zn(2+)(in) + 2 H(+)(out) = Zn(2+)(out) + 2 H(+)(in). Functionally, probable proton-coupled zinc ion antiporter mediating zinc import from cytoplasm potentially into the endocytic compartment. Controls zinc deposition in milk. This Bos taurus (Bovine) protein is Probable proton-coupled zinc antiporter SLC30A4.